The sequence spans 387 residues: Carboxynorspermidine/carboxyspermidine decarboxylase (387 aa).

Residue Lys51 is modified to N6-(pyridoxal phosphate)lysine. Residues Glu248 and Asp284 each contribute to the substrate site.

It belongs to the Orn/Lys/Arg decarboxylase class-II family. NspC subfamily. As to quaternary structure, homodimer. Requires pyridoxal 5'-phosphate as cofactor.

It localises to the cytoplasm. It catalyses the reaction carboxynorspermidine + H(+) = norspermidine + CO2. The catalysed reaction is carboxyspermidine + H(+) = spermidine + CO2. Its function is as follows. Catalyzes the decarboxylation of carboxynorspermidine and carboxyspermidine. Essential for biofilm formation. The sequence is that of Carboxynorspermidine/carboxyspermidine decarboxylase from Vibrio cholerae serotype O1 (strain ATCC 39315 / El Tor Inaba N16961).